Reading from the N-terminus, the 840-residue chain is Translation initiation factor IF-2 (840 aa).

A compositionally biased stretch (basic and acidic residues) spans 95-143 (RSPDEIEAERQRELEEQRAAEEAERLKAEEAAARQRAEEEARKAEEAAR). Disordered regions lie at residues 95–155 (RSPD…ATAG) and 173–256 (PAAV…PTGP). The segment covering 144–155 (AKAAQEAAATAG) has biased composition (low complexity). 2 stretches are compositionally biased toward basic and acidic residues: residues 175 to 191 (AVEERKKEEPRRVPKRD) and 223 to 232 (STDEESDGYR). Positions 233–247 (RGGRGGKSKLKKRNQ) are enriched in basic residues. The region spanning 340 to 509 (TRAPVVTVMG…LLQAEVLELK (170 aa)) is the tr-type G domain. The interval 349-356 (GHVDHGKT) is G1. Position 349-356 (349-356 (GHVDHGKT)) interacts with GTP. Positions 374 to 378 (GITQH) are G2. The G3 stretch occupies residues 395-398 (DTPG). GTP is bound by residues 395–399 (DTPGH) and 449–452 (NKID). The G4 stretch occupies residues 449 to 452 (NKID). Residues 485-487 (SAK) form a G5 region.

Belongs to the TRAFAC class translation factor GTPase superfamily. Classic translation factor GTPase family. IF-2 subfamily.

The protein localises to the cytoplasm. Functionally, one of the essential components for the initiation of protein synthesis. Protects formylmethionyl-tRNA from spontaneous hydrolysis and promotes its binding to the 30S ribosomal subunits. Also involved in the hydrolysis of GTP during the formation of the 70S ribosomal complex. This Pseudomonas aeruginosa (strain ATCC 15692 / DSM 22644 / CIP 104116 / JCM 14847 / LMG 12228 / 1C / PRS 101 / PAO1) protein is Translation initiation factor IF-2.